A 120-amino-acid polypeptide reads, in one-letter code: Large ribosomal subunit protein bL17 (120 aa).

This sequence belongs to the bacterial ribosomal protein bL17 family. Part of the 50S ribosomal subunit. Contacts protein L32.

The polypeptide is Large ribosomal subunit protein bL17 (Mycoplasmopsis synoviae (strain 53) (Mycoplasma synoviae)).